We begin with the raw amino-acid sequence, 503 residues long: Arabinose import ATP-binding protein AraG 1 (503 aa).

ABC transporter domains lie at 5 to 240 (LRFD…MVGR) and 251 to 497 (RTLG…LPQT). Residue 37 to 44 (GENGAGKS) participates in ATP binding.

Belongs to the ABC transporter superfamily. Arabinose importer (TC 3.A.1.2.2) family. The complex is composed of two ATP-binding proteins (AraG), two transmembrane proteins (AraH) and a solute-binding protein (AraF).

The protein resides in the cell inner membrane. It carries out the reaction L-arabinose(out) + ATP + H2O = L-arabinose(in) + ADP + phosphate + H(+). In terms of biological role, part of the ABC transporter complex AraFGH involved in arabinose import. Responsible for energy coupling to the transport system. The polypeptide is Arabinose import ATP-binding protein AraG 1 (Burkholderia cenocepacia (strain HI2424)).